The sequence spans 337 residues: tRNA N6-adenosine threonylcarbamoyltransferase (337 aa).

H111 and H115 together coordinate Fe cation. Substrate contacts are provided by residues L134–G138, D167, G180, and N272. A Fe cation-binding site is contributed by D300.

This sequence belongs to the KAE1 / TsaD family. Fe(2+) is required as a cofactor.

It is found in the cytoplasm. It carries out the reaction L-threonylcarbamoyladenylate + adenosine(37) in tRNA = N(6)-L-threonylcarbamoyladenosine(37) in tRNA + AMP + H(+). Functionally, required for the formation of a threonylcarbamoyl group on adenosine at position 37 (t(6)A37) in tRNAs that read codons beginning with adenine. Is involved in the transfer of the threonylcarbamoyl moiety of threonylcarbamoyl-AMP (TC-AMP) to the N6 group of A37, together with TsaE and TsaB. TsaD likely plays a direct catalytic role in this reaction. This chain is tRNA N6-adenosine threonylcarbamoyltransferase, found in Escherichia coli O157:H7.